Here is a 785-residue protein sequence, read N- to C-terminus: Terminal nucleotidyltransferase 4A (785 aa).

Residues 56 to 184 are disordered; the sequence is AAGRAAPAAG…QFHPGRRKRE (129 aa). Over residues 68-85 the composition is skewed to pro residues; it reads GPAPAASSPPPAPGPAAL. 2 stretches are compositionally biased toward low complexity: residues 86–98 and 106–145; these read PPAL…PAAD and SPSL…AGSG. Mg(2+) contacts are provided by Asp-290 and Asp-292. Gly-353, Lys-378, Ser-396, and Tyr-397 together coordinate ATP. One can recognise a PAP-associated domain in the interval 421-480; sequence NLGMLLVEFFELYGRNFNYLKTGIRIKEGGAYIAKEEIMKAMTSGYRPSMLCIEDPLLPG. ATP is bound by residues Asn-481 and Arg-485. The segment covering 593 to 611 has biased composition (low complexity); it reads PQLLSSGSSASSVSSLSGS. Disordered stretches follow at residues 593–625 and 731–785; these read PQLL…TPSV and KGSH…SLSR. Residues 757–774 are compositionally biased toward basic residues; it reads RGHHQYNRTGWRRKKHAH.

The protein belongs to the DNA polymerase type-B-like family. In terms of assembly, component of a nuclear TRAMP-like complex, an ATP-dependent exosome regulatory complex consisting of a helicase (MTREX), an oligadenylate polymerase (TENT4B or TENT4A), and a substrate specific RNA-binding factor (ZCCHC7 or ZCCHC8). Several TRAMP-like complexes exist with specific compositions and are associated with nuclear, or nucleolar RNA exosomes. It depends on Mg(2+) as a cofactor. Mn(2+) serves as cofactor.

The protein resides in the cytoplasm. The protein localises to the nucleus. Its subcellular location is the nucleoplasm. It carries out the reaction RNA(n) + ATP = RNA(n)-3'-adenine ribonucleotide + diphosphate. In terms of biological role, terminal nucleotidyltransferase that catalyzes preferentially the transfer of ATP and GTP on RNA 3' poly(A) tail creating a heterogeneous 3' poly(A) tail leading to mRNAs stabilization by protecting mRNAs from active deadenylation. Also functions as a catalytic subunit of a TRAMP-like complex which has a poly(A) RNA polymerase activity and is involved in a post-transcriptional quality control mechanism. Polyadenylation with short oligo(A) tails is required for the degradative activity of the exosome on several of its nuclear RNA substrates. Has no terminal uridylyltransferase activity, and does not play a role in replication-dependent histone mRNA degradation via uridylation. This chain is Terminal nucleotidyltransferase 4A, found in Mus musculus (Mouse).